The following is a 92-amino-acid chain: Small ribosomal subunit protein uS17 (92 aa).

It belongs to the universal ribosomal protein uS17 family. In terms of assembly, part of the 30S ribosomal subunit.

Its function is as follows. One of the primary rRNA binding proteins, it binds specifically to the 5'-end of 16S ribosomal RNA. The polypeptide is Small ribosomal subunit protein uS17 (Bordetella petrii (strain ATCC BAA-461 / DSM 12804 / CCUG 43448)).